A 131-amino-acid chain; its full sequence is Leptin receptor overlapping transcript-like 1 (131 aa).

4 helical membrane-spanning segments follow: residues 7–27, 32–52, 69–89, and 100–120; these read LISL…GCAL, KYWP…YCIA, LAIF…IVFA, and ALVL…FLVF.

The protein belongs to the OB-RGRP/VPS55 family. Interacts with RAB13. In terms of tissue distribution, widely expressed, with highest expression in heart, testis, adrenal gland, thymus, and spleen, and lowest expression in lung and skeletal muscle.

Its subcellular location is the membrane. Negatively regulates growth hormone (GH) receptor cell surface expression in liver. May play a role in liver resistance to GH during periods of reduced nutrient availability. This is Leptin receptor overlapping transcript-like 1 (LEPROTL1) from Homo sapiens (Human).